A 144-amino-acid polypeptide reads, in one-letter code: D-aminoacyl-tRNA deacylase (144 aa).

The short motif at 136-137 (GP) is the Gly-cisPro motif, important for rejection of L-amino acids element.

The protein belongs to the DTD family. In terms of assembly, homodimer.

Its subcellular location is the cytoplasm. The catalysed reaction is glycyl-tRNA(Ala) + H2O = tRNA(Ala) + glycine + H(+). It carries out the reaction a D-aminoacyl-tRNA + H2O = a tRNA + a D-alpha-amino acid + H(+). Functionally, an aminoacyl-tRNA editing enzyme that deacylates mischarged D-aminoacyl-tRNAs. Also deacylates mischarged glycyl-tRNA(Ala), protecting cells against glycine mischarging by AlaRS. Acts via tRNA-based rather than protein-based catalysis; rejects L-amino acids rather than detecting D-amino acids in the active site. By recycling D-aminoacyl-tRNA to D-amino acids and free tRNA molecules, this enzyme counteracts the toxicity associated with the formation of D-aminoacyl-tRNA entities in vivo and helps enforce protein L-homochirality. The protein is D-aminoacyl-tRNA deacylase of Pasteurella multocida (strain Pm70).